The following is a 149-amino-acid chain: MTRDMPDQLGRETPRDGTVLAFDYGEKKIGVALGNFITRQASALTILPNVTVEARFDAVGELIRQWTPVRLVVGMPVNPEAGPDDEEQPSMRLARRFGNQLNGRFNLPVEWVDERYSSRAAAMAGAKRGALDAEAARIILQQYFDELPL.

It belongs to the YqgF nuclease family.

It is found in the cytoplasm. Functionally, could be a nuclease involved in processing of the 5'-end of pre-16S rRNA. The protein is Putative pre-16S rRNA nuclease of Cupriavidus metallidurans (strain ATCC 43123 / DSM 2839 / NBRC 102507 / CH34) (Ralstonia metallidurans).